A 317-amino-acid polypeptide reads, in one-letter code: E3 ubiquitin-protein ligase NRDP1 (317 aa).

The segment at 18 to 57 (CPICSGVLEEPVQAPHCEHAFCNACITQWFSQQQTCPVDR) adopts an RING-type; degenerate zinc-finger fold. Residues 78–138 (KLQIACDNAV…LPNHNCIKHL (61 aa)) form an SIAH-type; degenerate zinc finger.

As to quaternary structure, interacts with USP8, ERBB3, PRKN and BIRC6. Interacts with CSF2RB, EPOR, IL3RA, MYD88 and TBK1. Interacts with CLEC16A. Post-translationally, autoubiquitinated. Autoubiquitination leads to proteasomal degradation. Deubiquitinated by USP8 to get stabilized which induces apoptosis. Detected in ovary, testis and prostate.

It carries out the reaction S-ubiquitinyl-[E2 ubiquitin-conjugating enzyme]-L-cysteine + [acceptor protein]-L-lysine = [E2 ubiquitin-conjugating enzyme]-L-cysteine + N(6)-ubiquitinyl-[acceptor protein]-L-lysine.. Its pathway is protein modification; protein ubiquitination. Its function is as follows. Acts as E3 ubiquitin-protein ligase and regulates the degradation of target proteins. Polyubiquitinates MYD88. Negatively regulates MYD88-dependent production of pro-inflammatory cytokines. Can promote TRIF-dependent production of type I interferon and inhibits infection with vesicular stomatitis virus. Promotes also activation of TBK1 and IRF3. Involved in the ubiquitination of erythropoietin (EPO) and interleukin-3 (IL-3) receptors. Thus, through maintaining basal levels of cytokine receptors, RNF41 is involved in the control of hematopoietic progenitor cell differentiation into myeloerythroid lineages. Contributes to the maintenance of steady-state ERBB3 levels by mediating its growth factor-independent degradation. Involved in the degradation of the inhibitor of apoptosis BIRC6 and thus is an important regulator of cell death by promoting apoptosis. Also acts as a PRKN modifier that accelerates its degradation, resulting in a reduction of PRKN activity, influencing the balance of intracellular redox state. The RNF41-PRKN pathway regulates autophagosome-lysosome fusion during late mitophagy. Mitophagy is a selective form of autophagy necessary for mitochondrial quality control. The chain is E3 ubiquitin-protein ligase NRDP1 (RNF41) from Homo sapiens (Human).